Reading from the N-terminus, the 98-residue chain is RNA-binding protein Hfq (98 aa).

The Sm domain occupies 11-71 (DVFLNHVRRS…ISTVMPATPV (61 aa)).

The protein belongs to the Hfq family. In terms of assembly, homohexamer.

In terms of biological role, RNA chaperone that binds small regulatory RNA (sRNAs) and mRNAs to facilitate mRNA translational regulation in response to envelope stress, environmental stress and changes in metabolite concentrations. Also binds with high specificity to tRNAs. The sequence is that of RNA-binding protein Hfq from Gluconacetobacter diazotrophicus (strain ATCC 49037 / DSM 5601 / CCUG 37298 / CIP 103539 / LMG 7603 / PAl5).